The following is a 459-amino-acid chain: N-chimaerin (459 aa).

A2 is modified (N-acetylalanine). The SH2 domain occupies 49-135; the sequence is EYHGMISREE…IETKAAEYIA (87 aa). The residue at position 192 (T192) is a Phosphothreonine. The Phorbol-ester/DAG-type zinc finger occupies 205–255; that stretch reads VHNFKVHTFRGPHWCEYCANFMWGLIAQGVKCADCGLNVHKQCSKMVPNDC. The Rho-GAP domain maps to 268 to 459; it reads CDLTTLVKAH…LLIKNEDILF (192 aa). Residue T340 is modified to Phosphothreonine.

In terms of assembly, interacts with EPHA4; effector of EPHA4 in axon guidance linking EPHA4 activation to RAC1 regulation. May also interact with EPHB1 and EPHB2. Post-translationally, phosphorylated. Phosphorylation is EPHA4 kinase activity-dependent.

GTPase-activating protein for p21-rac and a phorbol ester receptor. May play an important role in neuronal signal-transduction mechanisms. Involved in the assembly of neuronal locomotor circuits as a direct effector of EPHA4 in axon guidance. The sequence is that of N-chimaerin (Chn1) from Mus musculus (Mouse).